A 35-amino-acid polypeptide reads, in one-letter code: U1-segestritoxin-Sf1a (35 aa).

Cystine bridges form between Cys-10/Cys-22 and Cys-17/Cys-28. A keys region for toxin activity region spans residues 31–33 (DPW).

This sequence belongs to the neurotoxin 16 (SFI) family. In terms of tissue distribution, expressed by the venom gland.

It is found in the secreted. In terms of biological role, insecticidal toxin. The protein is U1-segestritoxin-Sf1a of Segestria florentina (Tube-web spider).